A 187-amino-acid polypeptide reads, in one-letter code: NAC domain-containing protein 104 (187 aa).

One can recognise an NAC domain in the interval 3 to 155 (LPPGFRFFPT…KWVICRVYEQ (153 aa)). The DNA-binding element occupies 94-161 (VGIKKYLTFY…VYEQNCSEEE (68 aa)). The segment at 118-142 (LPDSSSSSSRSSKRSSRASSSSHKP) is disordered.

In terms of tissue distribution, expressed in root xylem vessels. Expressed in stems, vascular tissue of cauline leaves and tracheary elements of sepals.

It is found in the nucleus. In terms of biological role, probable transcription factor that influences tracheary elements and xylem development by negatively regulating secondary cell wall fiber synthesis and programmed cell death. The sequence is that of NAC domain-containing protein 104 from Arabidopsis thaliana (Mouse-ear cress).